A 626-amino-acid polypeptide reads, in one-letter code: Chaperone protein HtpG (626 aa).

Positions 1 to 341 (METKQFKAES…SEDLSLNISR (341 aa)) are a; substrate-binding. Positions 342–552 (EILQHDRQLK…EGELSIEMEK (211 aa)) are b. Residues 490–509 (DLGIEGEEKENTSSSDDKEN) form a disordered region. Over residues 498 to 509 (KENTSSSDDKEN) the composition is skewed to basic and acidic residues. The c stretch occupies residues 553 to 626 (VLNAMPNNQN…FTNNICKIMK (74 aa)).

Belongs to the heat shock protein 90 family. As to quaternary structure, homodimer.

It is found in the cytoplasm. In terms of biological role, molecular chaperone. Has ATPase activity. The polypeptide is Chaperone protein HtpG (Clostridium botulinum (strain Okra / Type B1)).